The sequence spans 183 residues: Nascent polypeptide-associated complex subunit beta (183 aa).

Positions 62–127 constitute an NAC-A/B domain; it reads GADDKKLQTT…GEEKELTELV (66 aa). The disordered stretch occupies residues 150-183; the sequence is QNMQKQAGTEGKKDEDEDDIPDLVEGENFESNVE. A compositionally biased stretch (acidic residues) spans 164 to 183; it reads EDEDDIPDLVEGENFESNVE.

It belongs to the NAC-beta family. Part of the nascent polypeptide-associated complex (NAC), consisting of egd2 and egd1. NAC associates with ribosomes via egd1.

It localises to the cytoplasm. The protein localises to the nucleus. Functionally, component of the nascent polypeptide-associated complex (NAC), a dynamic component of the ribosomal exit tunnel, protecting the emerging polypeptides from interaction with other cytoplasmic proteins to ensure appropriate nascent protein targeting. The NAC complex also promotes mitochondrial protein import by enhancing productive ribosome interactions with the outer mitochondrial membrane and blocks the inappropriate interaction of ribosomes translating non-secretory nascent polypeptides with translocation sites in the membrane of the endoplasmic reticulum. EGD1 may act as a transcription factor that exert a negative effect on the expression of several genes that are transcribed by RNA polymerase II. The sequence is that of Nascent polypeptide-associated complex subunit beta (egd1) from Neosartorya fischeri (strain ATCC 1020 / DSM 3700 / CBS 544.65 / FGSC A1164 / JCM 1740 / NRRL 181 / WB 181) (Aspergillus fischerianus).